Here is a 342-residue protein sequence, read N- to C-terminus: Isopentenyl-diphosphate delta-isomerase (342 aa).

Substrate is bound at residue 11 to 12 (RK). FMN-binding positions include Ser-68, 69–71 (SMT), Ser-99, and Asn-127. Substrate is bound at residue 99–101 (SMR). Residue Gln-162 participates in substrate binding. Residue Glu-163 participates in Mg(2+) binding. Residues Lys-194, Thr-224, 274-276 (GLK), and 295-296 (AG) contribute to the FMN site.

This sequence belongs to the IPP isomerase type 2 family. Homooctamer. Dimer of tetramers. The cofactor is FMN. It depends on NADPH as a cofactor. Mg(2+) is required as a cofactor.

It localises to the cytoplasm. It carries out the reaction isopentenyl diphosphate = dimethylallyl diphosphate. Its function is as follows. Involved in the biosynthesis of isoprenoids. Catalyzes the 1,3-allylic rearrangement of the homoallylic substrate isopentenyl (IPP) to its allylic isomer, dimethylallyl diphosphate (DMAPP). This Rickettsia rickettsii (strain Iowa) protein is Isopentenyl-diphosphate delta-isomerase.